We begin with the raw amino-acid sequence, 1461 residues long: MPPFYIVITFLLSTVFRISQSVHHHLNEEELKQVFGVSNKHDVPEYSLIEATRHPLKNGNLKMKFTAWNDTYHLNLRKNSRIVSPHIISVVRHGDDDVTTYAGLRDYEQCHYQGEVKSHGNMKAAISDCGALMGSIVMEDHFLVLQTLPKRVHHLQKERHLVYKRSAGLLTNAESKIREEITRLQEEQESFCDTSEQLDDPAMTIPAHLHFNYTIPTSAQLDSSFIFPNMDPITLEIGLFLDSKLFEHFEREYIQDAEQHLLEFSLALINNVHVLYQQDTLTPNLDIVIVRYEMWRTQPSALSTGVHKNGQAQSLLDAFCRYQAHMNPGTDLTDMNHYDHGVLLTGYDIYHTTTSVAGVAPVARMCDPLFACSLVEGLHLGRSFVLAHEMGHNMGMVHDGVQNQCNKGCCLMSAVNGAGKTTWSDCSVREFNAFLLQLDESGRGNCLRDASPGLISTNHLSDLRLPGQRFTADQQCSYFWGRDYKVEIPNGKAMDDICRILWCGNSGSTISTAHPALEGSWCGANKWCHKGQCTHWTFGLTPVPIDGEWSEWGGAEKGCPIQQCAVSGSITVQGQHRDCVNPAPNNGGKTCEGANIRGIVCGATSSNCLGFTREEFGNKICSSIKYDPHKPDQQLTGEGFEHSTQPCRVWCHLIGSELIRNKGQFPDGTPCGFDAYCVGGQCLALSCDNKALVEQPEDCPRIEGRSVHQWEEWSSWSECSVSCGLGGREVRERKCSSGRKCQGVSEESRPCEGVLRDCEEFGEWKEWGSCSEKCALGVQKRFRPCLTDQCSSKHLQEERPCDNEGCWTNWDEWSSCSQSCGGGRRYRIRKCLDDKCDGDDLEKESCNTQKCISQSWGDWLPCSVSCGIGFQIRERLCDGELCATANKQARTCNQQQCPSAFSLSVWSEWGEWTTCSATCGEGLQSRERSCRRGSCTEDDASQTRRCVNGPCEHSYLTWSEWTTCETCSSFDSRKRIAKCDGTTENCQDKIDEETCDIACLREKHSFGPISPRRPKLITSNDLRKAFGRPLLPIESIHSEKWSEWGPCSVTCGSGRRVRTRGCQEASCPEQHIQTEECNLNSCLELFIWSDWSSCSKSCGQDGIQTRQKLCLFNNAECSSYAESRRCKDLPSCSSISSGRTISENGFDAPRWSEWSSWSACSCFSLTSTRRRFCQVVDPTVQGFCAGAILEQIPCAPGSCSPSAGGWSLWSEWSSCSKDCGDTGHQIRNRMCSEPIPSNRGAYCSGYSFDQRPCVMDNVCSDEKVDGGWTDWTAWSECTDYCRNGHRSRTRFCANPKPSQGGAQCTGSDFELNPCFDPARCHLRDGGWSTWSDWTPCSASCGFGVQTRDRSCSSPEPKGGQSCSGLAHQTSLCDLPACDHESDGEWSAWNEWSGCMGNCGIGTRTRVRACVSPPVSDGGQPCFGRSSEITECRQSPSTALCSSFITSSHLADGYFIDTDQQQ.

The signal sequence occupies residues 1-21 (MPPFYIVITFLLSTVFRISQS). A propeptide spanning residues 22–163 (VHHHLNEEEL…HLQKERHLVY (142 aa)) is cleaved from the precursor. N-linked (GlcNAc...) asparagine glycosylation occurs at asparagine 69. The short motif at 190–197 (SFCDTSEQ) is the Cysteine switch element. Asparagine 212 is a glycosylation site (N-linked (GlcNAc...) asparagine). Positions 233 to 435 (ITLEIGLFLD…CSVREFNAFL (203 aa)) constitute a Peptidase M12B domain. Histidine 388 is a Zn(2+) binding site. The active site involves glutamate 389. Zn(2+)-binding residues include histidine 392 and histidine 398. A disulfide bond links cysteine 405 and cysteine 410. The Disintegrin domain maps to 464–546 (RLPGQRFTAD…TFGLTPVPID (83 aa)). TSP type-1 domains lie at 708-759 (HQWE…RDCE), 761-802 (FGEW…RPCD), 804-852 (EGCW…QKCI), 853-898 (SQSW…QQCP), 903-952 (LSVW…GPCE), 955-1000 (YLTW…IACL), 1035-1083 (SIHS…NSCL), 1087-1133 (IWSD…PSCS), 1148-1200 (APRW…GSCS), 1203-1260 (AGGW…NVCS), 1265-1321 (DGGW…ARCH), 1324-1378 (DGGW…PACD), and 1382-1435 (DGEW…RQSP). 3 disulfides stabilise this stretch: cysteine 719–cysteine 751, cysteine 723–cysteine 758, and cysteine 735–cysteine 741. 6 disulfide bridges follow: cysteine 816-cysteine 846, cysteine 820-cysteine 851, cysteine 831-cysteine 836, cysteine 862-cysteine 892, cysteine 866-cysteine 897, and cysteine 877-cysteine 882. 3 disulfide bridges follow: cysteine 1047–cysteine 1077, cysteine 1051–cysteine 1082, and cysteine 1062–cysteine 1067. 12 cysteine pairs are disulfide-bonded: cysteine 1160–cysteine 1194, cysteine 1162–cysteine 1199, cysteine 1173–cysteine 1184, cysteine 1215–cysteine 1253, cysteine 1219–cysteine 1259, cysteine 1231–cysteine 1243, cysteine 1277–cysteine 1314, cysteine 1281–cysteine 1320, cysteine 1292–cysteine 1304, cysteine 1336–cysteine 1372, cysteine 1340–cysteine 1377, and cysteine 1351–cysteine 1362.

Zn(2+) serves as cofactor. In terms of tissue distribution, in hermaphrodites, expressed in the vulva, head ganglia, ventral nerve cord and amphid neurons. Expressed in the rays of the male tail.

It localises to the secreted. Functionally, plays a role in ray morphogenesis in the male tail, probably by remodeling the extracellular matrix (ECM) in the cuticle. This Caenorhabditis elegans protein is A disintegrin and metalloproteinase with thrombospondin motifs adt-1.